A 506-amino-acid polypeptide reads, in one-letter code: Gallate 1-beta-glucosyltransferase 84A23 (506 aa).

His-20 (proton acceptor) is an active-site residue. Position 20 (His-20) interacts with an anthocyanidin. Residues Gln-345, His-360, Trp-363, Asn-364, Ser-365, and Glu-368 each contribute to the UDP-alpha-D-glucose site. Gly-383 is a binding site for an anthocyanidin. UDP-alpha-D-glucose-binding residues include Asp-384 and Gln-385.

The protein belongs to the UDP-glycosyltransferase family. In terms of tissue distribution, expressed in roots of the seedlings.

Its subcellular location is the cytoplasm. It catalyses the reaction 3,4,5-trihydroxybenzoate + UDP-alpha-D-glucose = 1-O-galloyl-beta-D-glucose + UDP. It carries out the reaction 3,4-dihydroxybenzoate + UDP-alpha-D-glucose = 1-O-(3,4-dihydroxy-benzoyl)-beta-D-glucose + UDP. The catalysed reaction is 4-hydroxybenzoate + UDP-alpha-D-glucose = 4-(beta-D-glucosyloxy)benzoate + UDP + H(+). The enzyme catalyses (E)-cinnamate + UDP-alpha-D-glucose = 1-O-(trans-cinnamoyl)-beta-D-glucose + UDP. It catalyses the reaction (E)-sinapate + UDP-alpha-D-glucose = 1-O-(trans-sinapoyl)-beta-D-glucose + UDP. It carries out the reaction (E)-4-coumarate + UDP-alpha-D-glucose = 1-O-(trans-4-coumaroyl)-beta-D-glucose + UDP. The catalysed reaction is (E)-caffeate + UDP-alpha-D-glucose = 1-O-[(E)-caffeoyl]-beta-D-glucose + UDP. The enzyme catalyses (E)-ferulate + UDP-alpha-D-glucose = 1-O-[(E)-feruloyl]-beta-D-glucose + UDP. It catalyses the reaction genistein + UDP-alpha-D-glucose = genistein 7-O-beta-D-glucoside + UDP + H(+). It carries out the reaction apigenin + UDP-alpha-D-glucose = apigenin 7-O-beta-D-glucoside + UDP + H(+). The catalysed reaction is luteolin + UDP-alpha-D-glucose = luteolin 7-O-beta-D-glucoside + UDP + H(+). Its function is as follows. Glucosyltransferase that catalyzes the formation of 1-O-beta-D-glucose esters with hydroxybenzoic acids and cinnamic acid including its derivatives as preferred glucosyl acceptors. Has significant activity with gallic acid (3,4,5-trihydroxybenzoic acid), 3,4-dihydroxybenzoic acid, 4-hydroxybenzoic acid, cinnamic acid, sinapic acid, coumaric acid, caffeic acid and ferulic acid in vitro. Gallic acid is the predicted native substrate of the enzyme, which thus catalyzes the formation of 1-O-galloyl-beta-D-glucose, the first committed step of hydrolyzable tannins (HTs) biosynthesis, with punicalagin isomers being the major HTs of pomegranate. Catalyzes the formation of flavonoid glucosides with genistein, apigenin and luteolin in vitro. Has low activity with benzoic acid, 2-hydroxybenzoic acid, 3-hydroxybenzoic acid, 2,4-dihydroxybenzoic acid, naringenin and quercetin. No activity with catechol, resveratrol, chlorogenic acid, catechin and epicatechin (building blocks of proanthocyanidins) or cyanidin, delphinidin and pelargonidin (the three anthocyanidins). This is Gallate 1-beta-glucosyltransferase 84A23 from Punica granatum (Pomegranate).